We begin with the raw amino-acid sequence, 314 residues long: Ribosomal protein uL3 glutamine methyltransferase (314 aa).

The protein belongs to the protein N5-glutamine methyltransferase family. PrmB subfamily.

It carries out the reaction L-glutaminyl-[ribosomal protein uL3] + S-adenosyl-L-methionine = N(5)-methyl-L-glutaminyl-[ribosomal protein uL3] + S-adenosyl-L-homocysteine + H(+). In terms of biological role, methylates large ribosomal subunit protein uL3 on a specific glutamine residue. This Vibrio cholerae serotype O1 (strain ATCC 39315 / El Tor Inaba N16961) protein is Ribosomal protein uL3 glutamine methyltransferase.